The chain runs to 242 residues: MKILIPTAKEMNTDLPSIEAIPLKPESQTVLDALALYSASQLESFYKVSAEKAAEEFQNIQALKRQTAQHYPALKLFDGLMYRNIKRDKLTEAEQDYLENHVFITSALYGVVPALSPMAPHRLDFLMKLKVAGKTLKSHWKAVYDEALKKEEVIFSLLSSEFETVFSKEIRAKMVTFKFMEDRGGQLKIHSTISKKARGAFLTALIENQVQTVGEARRLNFAGFVYREDLSQPQGLVFVKEV.

The protein belongs to the UPF0246 family.

This chain is UPF0246 protein SPD_1378, found in Streptococcus pneumoniae serotype 2 (strain D39 / NCTC 7466).